Consider the following 95-residue polypeptide: Bacterial microcompartment shell protein EutM (95 aa).

In terms of domain architecture, BMC spans Ala-6 to Pro-90.

Belongs to the bacterial microcompartments protein family. In terms of assembly, homohexamer; has a positively charged pore 9 Angstroms in diameter. The hexamers pack into a two-dimensional array. May interact with EutQ.

The protein localises to the bacterial microcompartment. It functions in the pathway amine and polyamine degradation; ethanolamine degradation. A component of the bacterial microcompartment (BMC) shell dedicated to ethanolamine degradation. Each homohexamer has a central pore with an opening of up to 9.0 Angstroms. Expression of the eut operon may allow this bacteria to use ethanolamine as a carbon, nitrogen and energy source. The pore probably allows metabolite passage into and out of the BMC. This Clostridioides difficile (strain 630) (Peptoclostridium difficile) protein is Bacterial microcompartment shell protein EutM.